We begin with the raw amino-acid sequence, 283 residues long: Diaminopimelate epimerase (283 aa).

Substrate-binding residues include Asn-13 and Asn-67. Residue Cys-76 is the Proton donor of the active site. Residues 77-78, Asn-166, Asn-199, and 217-218 each bind substrate; these read GN and ER. Residue Cys-226 is the Proton acceptor of the active site. Position 227–228 (227–228) interacts with substrate; sequence GT.

This sequence belongs to the diaminopimelate epimerase family. In terms of assembly, homodimer.

Its subcellular location is the cytoplasm. It carries out the reaction (2S,6S)-2,6-diaminopimelate = meso-2,6-diaminopimelate. Its pathway is amino-acid biosynthesis; L-lysine biosynthesis via DAP pathway; DL-2,6-diaminopimelate from LL-2,6-diaminopimelate: step 1/1. Catalyzes the stereoinversion of LL-2,6-diaminopimelate (L,L-DAP) to meso-diaminopimelate (meso-DAP), a precursor of L-lysine and an essential component of the bacterial peptidoglycan. This is Diaminopimelate epimerase from Desulforapulum autotrophicum (strain ATCC 43914 / DSM 3382 / VKM B-1955 / HRM2) (Desulfobacterium autotrophicum).